The primary structure comprises 1848 residues: Unconventional myosin-Vb (1848 aa).

Met1 bears the N-acetylmethionine mark. Residues 8–60 (SQCTRVWIPDPDEVWRSAELTKDYKEGDKSLQLRLEDETILEYPIDVQRNQLP) enclose the Myosin N-terminal SH3-like domain. The requires for interaction with LIMA1 stretch occupies residues 21-40 (VWRSAELTKDYKEGDKSLQL). Residues 69 to 761 (VGENDLTALS…QVAYLEKLRA (693 aa)) enclose the Myosin motor domain. 163–170 (GESGAGKT) is an ATP binding site. A disordered region spans residues 596–630 (KDPVPATTPGKGSSSKISVRSARPPMKVSNKEHKK). Residues 640-662 (LHLLMETLNATTPHYVRCIKPND) form an actin-binding region. IQ domains lie at 769 to 798 (IMIQ…QRYC), 792 to 821 (LTLQ…VLQK), 817 to 848 (VVLQ…FTRA), 840 to 869 (VVIQ…TIQK), 865 to 896 (TTIQ…AFRM), and 888 to 917 (IVIQ…EHLK). Coiled-coil stretches lie at residues 899-1266 (ARRE…ILRT) and 1341-1471 (RLLE…GMLE). 2 disordered regions span residues 1093–1123 (QTPG…EIGD) and 1166–1192 (QLEK…LDPN). Positions 1101–1121 (PSNQSSLESDSNYPSISTSEI) are enriched in polar residues. A compositionally biased stretch (basic and acidic residues) spans 1166 to 1179 (QLEKREQQDSKKVQ). Ser1446 bears the Phosphoserine mark. One can recognise a Dilute domain in the interval 1526 to 1803 (TSTINGIKKV…IRTIQAQLQE (278 aa)).

It belongs to the TRAFAC class myosin-kinesin ATPase superfamily. Myosin family. Component of the CART complex, at least composed of ACTN4, HGS/HRS, MYO5B and TRIM3. Interacts with RAB11FIP2, RAB11A, and RAB8A. Found in a complex with CFTR and RAB11A. Interacts with NPC1L1;. Interacts with LIMA1.

It localises to the cytoplasm. Its function is as follows. May be involved in vesicular trafficking via its association with the CART complex. The CART complex is necessary for efficient transferrin receptor recycling but not for EGFR degradation. Required in a complex with RAB11A and RAB11FIP2 for the transport of NPC1L1 to the plasma membrane. Together with RAB11A participates in CFTR trafficking to the plasma membrane and TF (transferrin) recycling in nonpolarized cells. Together with RAB11A and RAB8A participates in epithelial cell polarization. Together with RAB25 regulates transcytosis. Required for proper localization of bile salt export pump ABCB11 at the apical/canalicular plasma membrane of hepatocytes. This is Unconventional myosin-Vb (MYO5B) from Homo sapiens (Human).